Reading from the N-terminus, the 339-residue chain is Polyhydroxybutyrate depolymerase (339 aa).

Residues 1–20 (MFDSVKIAWLVALGAAQVAA) form the signal peptide. The active site involves Ser39. Cys70 and Cys79 are joined by a disulfide. Asp121 is an active-site residue. N-linked (GlcNAc...) asparagine glycosylation occurs at Asn144. His155 is a catalytic residue. 3 disulfide bridges follow: Cys169-Cys180, Cys234-Cys241, and Cys250-Cys304. Position 307 (Trp307) interacts with (3R)-hydroxybutanoate trimer.

This sequence belongs to the carbohydrate esterase 1 (CE1) family.

The protein localises to the secreted. It carries out the reaction [(3R)-hydroxybutanoate](n) + H2O = [(3R)-hydroxybutanoate](n-1) + (R)-3-hydroxybutanoate + H(+). The enzyme is completely inhibited by dithiothreitol (DTT) and diisopropylfluorophosphate (DFP), and partially inhibited by HgCl(2) and by enzyme3-(p-nitrophenoxy)propane (EPNP). Activity is not affected by N-ethylmaleimide (NEM) or phenylmethylsulfonyl fluoride (PMSF). In terms of biological role, esterase involved in the hydrolysis of polyhydroxybutyrate, a microbial polyester that can be produced from renewable resources. The polypeptide is Polyhydroxybutyrate depolymerase (Talaromyces funiculosus (Fruitlet core rot fungus)).